The following is a 113-amino-acid chain: Cell division protein FtsB (113 aa).

The Cytoplasmic segment spans residues 1-3; it reads MRL. Residues 4-21 form a helical membrane-spanning segment; it reads ISLLLFVLLLAIQYPLWL. Residues 22–113 are Periplasmic-facing; that stretch reads GKGGWLRVWD…PNSVAGRGGH (92 aa). A coiled-coil region spans residues 34 to 64; the sequence is RQVNEQTVHNQALKLRNAKLEGEVKDLQDGT. The disordered stretch occupies residues 93–113; the sequence is KVSATPPLPPPPNSVAGRGGH.

It belongs to the FtsB family. Part of a complex composed of FtsB, FtsL and FtsQ.

It localises to the cell inner membrane. Functionally, essential cell division protein. May link together the upstream cell division proteins, which are predominantly cytoplasmic, with the downstream cell division proteins, which are predominantly periplasmic. The chain is Cell division protein FtsB from Cupriavidus metallidurans (strain ATCC 43123 / DSM 2839 / NBRC 102507 / CH34) (Ralstonia metallidurans).